A 479-amino-acid chain; its full sequence is MNRNPDHNTLPNITLKIIETYLGRLPSVNEYYMLKLQTRNIQKITVFNKDIFVSLVKKNKKRFFSDVDTSASEIKDRILSYFSKQTQTYNIGKLFTIIELQSVLVTTYTDILGVLTIKAPNVISSKISYNVTSMEELARDMLNSMNVAVIDKAKVMGRHNVSSLVKNVNKLMEEYLRRHNKSCICYGSYSLYLINPNIRYGDIDILQTNSRTFLIDLAFLIKFITGNNIILSKIPYLRNYMVIKDENDNHIIDSFNIRQDTMNVVPKIFIDNIYIVDPTFQLLNMIKMFSQIDRLEDLSKDPEKFNARMATMLEYVRYTHGIVFDGKRNNIPMKCIIDENNRIVTVTTKDYFSFKKCLAYLDENVLSSDILDLNADTSCDFESVTNSVYLIHDNIMYTYFSNTILLSDKGKVHEISARGLCAHILLYQMLTSGEYKQCLSDLLNSMMNRDKIPIYSHTERDKKPGRHGFINIEKDIIVF.

Active-site residues include Asp-202 and Asp-204. Residues Asp-202, Asp-204, and Asp-253 each contribute to the Ca(2+) site.

The protein belongs to the poxviridae poly(A) polymerase catalytic subunit family. As to quaternary structure, heterodimer of a large (catalytic) subunit and a small (regulatory) subunit.

The catalysed reaction is RNA(n) + ATP = RNA(n)-3'-adenine ribonucleotide + diphosphate. Functionally, polymerase that creates the 3'-poly(A) tail of mRNA's. The sequence is that of Poly(A) polymerase catalytic subunit (OPG063) from Camelus.